The chain runs to 548 residues: Acetolactate synthase isozyme 2 large subunit (548 aa).

Glu-47 contributes to the thiamine diphosphate binding site. FAD-binding positions include Arg-149, 251 to 272, and 294 to 313; these read HGTKAANFAVQECDLLIAVGAR and DIDPAEMNKLRQAHVALQGD. The tract at residues 377–457 is thiamine pyrophosphate binding; that stretch reads QHQMWAAQHI…LKIVLLDNQR (81 aa). Mg(2+) contacts are provided by Asp-428 and Asn-455.

It belongs to the TPP enzyme family. Tetramer of two large (IlvG) and two small (IlvM) chains. The cofactor is FAD. Mg(2+) serves as cofactor. Requires thiamine diphosphate as cofactor.

The enzyme catalyses 2 pyruvate + H(+) = (2S)-2-acetolactate + CO2. It functions in the pathway amino-acid biosynthesis; L-isoleucine biosynthesis; L-isoleucine from 2-oxobutanoate: step 1/4. It participates in amino-acid biosynthesis; L-valine biosynthesis; L-valine from pyruvate: step 1/4. Inhibited by the herbicides chlorimuron ethyl, chlorsulfuron and imazapyr. In terms of biological role, catalyzes the first step in the biosynthesis of branched-chain amino acids. The polypeptide is Acetolactate synthase isozyme 2 large subunit (ilvG) (Escherichia coli (strain K12)).